The chain runs to 367 residues: Phospho-N-acetylmuramoyl-pentapeptide-transferase (367 aa).

10 helical membrane-spanning segments follow: residues 16–36 (LLLA…WVRF), 62–82 (TMGG…FNLV), 87–107 (MLLP…DDWL), 125–145 (FWIM…PQPY), 158–178 (VGEV…IVFI), 190–210 (SLAG…TFLA), 214–234 (LTNL…FLWY), 240–260 (QVFM…VVAL), 264–284 (QWLL…STMI), and 326–346 (FVLI…IFGP).

This sequence belongs to the glycosyltransferase 4 family. MraY subfamily. It depends on Mg(2+) as a cofactor.

Its subcellular location is the cell membrane. The catalysed reaction is UDP-N-acetyl-alpha-D-muramoyl-L-alanyl-gamma-D-glutamyl-meso-2,6-diaminopimeloyl-D-alanyl-D-alanine + di-trans,octa-cis-undecaprenyl phosphate = di-trans,octa-cis-undecaprenyl diphospho-N-acetyl-alpha-D-muramoyl-L-alanyl-D-glutamyl-meso-2,6-diaminopimeloyl-D-alanyl-D-alanine + UMP. Its pathway is cell wall biogenesis; peptidoglycan biosynthesis. Functionally, catalyzes the initial step of the lipid cycle reactions in the biosynthesis of the cell wall peptidoglycan: transfers peptidoglycan precursor phospho-MurNAc-pentapeptide from UDP-MurNAc-pentapeptide onto the lipid carrier undecaprenyl phosphate, yielding undecaprenyl-pyrophosphoryl-MurNAc-pentapeptide, known as lipid I. The protein is Phospho-N-acetylmuramoyl-pentapeptide-transferase of Chloroflexus aurantiacus (strain ATCC 29366 / DSM 635 / J-10-fl).